A 209-amino-acid chain; its full sequence is Guanylate kinase (209 aa).

Positions 7-185 (GNLYIVAAPS…AAMELQSIVI (179 aa)) constitute a Guanylate kinase-like domain. 14–21 (APSGGGKT) lines the ATP pocket.

The protein belongs to the guanylate kinase family.

Its subcellular location is the cytoplasm. The catalysed reaction is GMP + ATP = GDP + ADP. In terms of biological role, essential for recycling GMP and indirectly, cGMP. This chain is Guanylate kinase, found in Legionella pneumophila (strain Paris).